The following is a 166-amino-acid chain: Putative pre-16S rRNA nuclease (166 aa).

The tract at residues 1–24 (MPDTAAPTPDRPGPDDPGRGRRLG) is disordered.

It belongs to the YqgF nuclease family.

It localises to the cytoplasm. Its function is as follows. Could be a nuclease involved in processing of the 5'-end of pre-16S rRNA. This is Putative pre-16S rRNA nuclease from Mycobacteroides abscessus (strain ATCC 19977 / DSM 44196 / CCUG 20993 / CIP 104536 / JCM 13569 / NCTC 13031 / TMC 1543 / L948) (Mycobacterium abscessus).